Reading from the N-terminus, the 464-residue chain is ATP synthase subunit beta (464 aa).

Position 153–160 (153–160 (GGAGVGKT)) interacts with ATP.

Belongs to the ATPase alpha/beta chains family. In terms of assembly, F-type ATPases have 2 components, CF(1) - the catalytic core - and CF(0) - the membrane proton channel. CF(1) has five subunits: alpha(3), beta(3), gamma(1), delta(1), epsilon(1). CF(0) has three main subunits: a(1), b(2) and c(9-12). The alpha and beta chains form an alternating ring which encloses part of the gamma chain. CF(1) is attached to CF(0) by a central stalk formed by the gamma and epsilon chains, while a peripheral stalk is formed by the delta and b chains.

Its subcellular location is the cell membrane. The enzyme catalyses ATP + H2O + 4 H(+)(in) = ADP + phosphate + 5 H(+)(out). Functionally, produces ATP from ADP in the presence of a proton gradient across the membrane. The catalytic sites are hosted primarily by the beta subunits. This is ATP synthase subunit beta from Alkaliphilus oremlandii (strain OhILAs) (Clostridium oremlandii (strain OhILAs)).